The chain runs to 381 residues: 1-deoxy-D-xylulose 5-phosphate reductoisomerase (381 aa).

Threonine 11, glycine 12, serine 13, isoleucine 14, lysine 36, asparagine 37, and asparagine 121 together coordinate NADPH. Residue lysine 122 participates in 1-deoxy-D-xylulose 5-phosphate binding. Residue glutamate 123 participates in NADPH binding. Residue aspartate 147 coordinates Mn(2+). Serine 148, glutamate 149, serine 173, and histidine 196 together coordinate 1-deoxy-D-xylulose 5-phosphate. Glutamate 149 provides a ligand contact to Mn(2+). An NADPH-binding site is contributed by glycine 202. Serine 209, asparagine 214, lysine 215, and glutamate 218 together coordinate 1-deoxy-D-xylulose 5-phosphate. Glutamate 218 lines the Mn(2+) pocket.

Belongs to the DXR family. Requires Mg(2+) as cofactor. Mn(2+) is required as a cofactor.

The catalysed reaction is 2-C-methyl-D-erythritol 4-phosphate + NADP(+) = 1-deoxy-D-xylulose 5-phosphate + NADPH + H(+). It participates in isoprenoid biosynthesis; isopentenyl diphosphate biosynthesis via DXP pathway; isopentenyl diphosphate from 1-deoxy-D-xylulose 5-phosphate: step 1/6. Catalyzes the NADPH-dependent rearrangement and reduction of 1-deoxy-D-xylulose-5-phosphate (DXP) to 2-C-methyl-D-erythritol 4-phosphate (MEP). This Acetivibrio thermocellus (strain ATCC 27405 / DSM 1237 / JCM 9322 / NBRC 103400 / NCIMB 10682 / NRRL B-4536 / VPI 7372) (Clostridium thermocellum) protein is 1-deoxy-D-xylulose 5-phosphate reductoisomerase.